The primary structure comprises 413 residues: Serine hydroxymethyltransferase (413 aa).

Residues L117 and 121–123 contribute to the (6S)-5,6,7,8-tetrahydrofolate site; that span reads GHL. At K226 the chain carries N6-(pyridoxal phosphate)lysine. Residues E239 and 349–351 contribute to the (6S)-5,6,7,8-tetrahydrofolate site; that span reads SPF.

The protein belongs to the SHMT family. In terms of assembly, homodimer. It depends on pyridoxal 5'-phosphate as a cofactor.

Its subcellular location is the cytoplasm. It catalyses the reaction (6R)-5,10-methylene-5,6,7,8-tetrahydrofolate + glycine + H2O = (6S)-5,6,7,8-tetrahydrofolate + L-serine. It participates in one-carbon metabolism; tetrahydrofolate interconversion. It functions in the pathway amino-acid biosynthesis; glycine biosynthesis; glycine from L-serine: step 1/1. Functionally, catalyzes the reversible interconversion of serine and glycine with tetrahydrofolate (THF) serving as the one-carbon carrier. This reaction serves as the major source of one-carbon groups required for the biosynthesis of purines, thymidylate, methionine, and other important biomolecules. Also exhibits THF-independent aldolase activity toward beta-hydroxyamino acids, producing glycine and aldehydes, via a retro-aldol mechanism. The sequence is that of Serine hydroxymethyltransferase from Bacillus cereus (strain G9842).